The primary structure comprises 340 residues: Protein LSM14 homolog car-1 (340 aa).

The Sm domain occupies 1–81 (MSNQTPYIGS…IKDLIVCDTP (81 aa)). The span at 101–125 (SRSAPASDGAPAASAGSSRAGTPSR) shows a compositional bias: low complexity. The tract at residues 101–148 (SRSAPASDGAPAASAGSSRAGTPSRNSPLGQIIQNQRPGRGGYQQNFQ) is disordered. Residues 126–148 (NSPLGQIIQNQRPGRGGYQQNFQ) are compositionally biased toward polar residues. A DFDF domain is found at 178–214 (VNHREKLKFESDFDFEKANEKFQEVLVDNLEKLNIED). An FFD box motif is present at residues 227–243 (AFYDKKTSFFDNISCES). The short motif at 251–271 (TGRPDWKKERETNQETFGHNA) is the TFG box element. The disordered stretch occupies residues 277–340 (YRRGFGGRGR…QGNTAAAAEQ (64 aa)). A compositionally biased stretch (gly residues) spans 280–296 (GFGGRGRGGNRGYGGYN). Residues 312-325 (GYRQNNGGYRRGGY) show a composition bias toward low complexity.

This sequence belongs to the LSM14 family.

Its subcellular location is the nucleus. Functionally, transcriptional regulator. Involved in modulating embryonic expression of ATP-dependent chaperone cdc-48.1. May play a role in mRNA gene silencing, and RNA granule (P-body) assembly. In Caenorhabditis elegans, this protein is Protein LSM14 homolog car-1.